The sequence spans 89 residues: Alpha-latrotoxin associated low molecular weight protein SGV242-280 (89 aa).

An N-terminal signal peptide occupies residues 1–18 (MSKLHFLILLSVIVSVFC).

Belongs to the arthropod CHH/MIH/GIH/VIH hormone family. In terms of tissue distribution, expressed by the venom gland.

Its subcellular location is the secreted. May increase the toxicity of alpha-latrotoxin and/or other venom components. Is non-toxic to mice and to the cockroach Periplaneta americana. The protein is Alpha-latrotoxin associated low molecular weight protein SGV242-280 of Steatoda grossa (False black widow).